We begin with the raw amino-acid sequence, 556 residues long: ATP synthase subunit alpha 2 (556 aa).

177–184 is an ATP binding site; sequence GDRATGKT. The disordered stretch occupies residues 514 to 556; sequence GGHAEDAADDMGGALDGEHASGDATSIAPTPPGGAEAGAPRKR. The segment covering 546-556 has biased composition (low complexity); sequence GGAEAGAPRKR.

It belongs to the ATPase alpha/beta chains family. In terms of assembly, F-type ATPases have 2 components, CF(1) - the catalytic core - and CF(0) - the membrane proton channel. CF(1) has five subunits: alpha(3), beta(3), gamma(1), delta(1), epsilon(1). CF(0) has three main subunits: a(1), b(2) and c(9-12). The alpha and beta chains form an alternating ring which encloses part of the gamma chain. CF(1) is attached to CF(0) by a central stalk formed by the gamma and epsilon chains, while a peripheral stalk is formed by the delta and b chains.

It is found in the cell inner membrane. The catalysed reaction is ATP + H2O + 4 H(+)(in) = ADP + phosphate + 5 H(+)(out). Functionally, produces ATP from ADP in the presence of a proton gradient across the membrane. The alpha chain is a regulatory subunit. This chain is ATP synthase subunit alpha 2, found in Burkholderia thailandensis (strain ATCC 700388 / DSM 13276 / CCUG 48851 / CIP 106301 / E264).